Here is a 434-residue protein sequence, read N- to C-terminus: Nicotinate phosphoribosyltransferase (434 aa).

Histidine 242 bears the Phosphohistidine; by autocatalysis mark.

The protein belongs to the NAPRTase family. Transiently phosphorylated on a His residue during the reaction cycle. Phosphorylation strongly increases the affinity for substrates and increases the rate of nicotinate D-ribonucleotide production. Dephosphorylation regenerates the low-affinity form of the enzyme, leading to product release.

It carries out the reaction nicotinate + 5-phospho-alpha-D-ribose 1-diphosphate + ATP + H2O = nicotinate beta-D-ribonucleotide + ADP + phosphate + diphosphate. Its pathway is cofactor biosynthesis; NAD(+) biosynthesis; nicotinate D-ribonucleotide from nicotinate: step 1/1. Catalyzes the synthesis of beta-nicotinate D-ribonucleotide from nicotinate and 5-phospho-D-ribose 1-phosphate at the expense of ATP. The chain is Nicotinate phosphoribosyltransferase from Mesorhizobium japonicum (strain LMG 29417 / CECT 9101 / MAFF 303099) (Mesorhizobium loti (strain MAFF 303099)).